Reading from the N-terminus, the 430-residue chain is Histone acetyltransferase type B subunit 2 (430 aa).

5 WD repeats span residues 129–169, 180–220, 233–273, 279–319, and 323–363; these read PHDG…ALTT, GHTA…FTSS, RHTD…EEEA, AHSK…QRLH, and GHED…EEQT. Residues 365-369 form an interaction with the histone H4 N-terminus region; it reads EDAED. One copy of the WD 6 repeat lies at 380-420; sequence GHTNRISEFSWCPNERWVVGSLADDNILQIWSPSRVIWGRD. Ser425 carries the phosphoserine modification.

This sequence belongs to the WD repeat RBAP46/RBAP48/MSI1 family. As to quaternary structure, component of the HAT-B complex composed of at least hat1 and hat2. The HAT-B complex binds to histone H4 tail. Component of the CENP-A recruiting complex composed of at least mis16, mis19, mis19 and mis20.

It localises to the cytoplasm. Its subcellular location is the nucleus. The protein localises to the chromosome. The protein resides in the centromere. It is found in the kinetochore. Regulatory subunit of the histone acetylase B (HAT-B) complex. The complex acetylates 'Lys-12' of histone H4 which is required for telomeric silencing. Component of the CENP-A recruiting complex that ensures the integrity of mitotic spindles through maintenance of kinetochore factors mis6/CENP-I and cnp1/CENP-A. Maintains the deacetylated state of histones specifically in the central core of the centromeres. The sequence is that of Histone acetyltransferase type B subunit 2 (mis16) from Schizosaccharomyces pombe (strain 972 / ATCC 24843) (Fission yeast).